Reading from the N-terminus, the 222-residue chain is Chorionic somatomammotropin hormone-like 1 (222 aa).

Positions 1–26 (MAAGSRTSLLLAFALLCLPWLQEAGA) are cleaved as a signal peptide. His44 and Glu205 together coordinate Zn(2+). A disulfide bridge links Cys213 with Cys220.

Belongs to the somatotropin/prolactin family.

Its subcellular location is the secreted. Functionally, may be a novel gestational hormone required to compensate for absence of other members of the GH/CS cluster during gestation. The polypeptide is Chorionic somatomammotropin hormone-like 1 (CSHL1) (Homo sapiens (Human)).